Here is a 528-residue protein sequence, read N- to C-terminus: Na(+)/H(+) antiporter NhaB (528 aa).

A run of 11 helical transmembrane segments spans residues 10 to 30, 63 to 83, 96 to 116, 131 to 165, 204 to 224, 240 to 260, 305 to 325, 359 to 379, 391 to 411, 449 to 469, and 476 to 496; these read IGNF…SFLI, YPLQ…MTSA, VLLL…LLLF, VSLM…FYAI, LLMH…VGEP, FVVR…LTCL, VLVG…VGLV, LAVF…APVI, LVIF…VFVG, ATPN…APLI, and MVWM…LAIE.

Belongs to the NhaB Na(+)/H(+) (TC 2.A.34) antiporter family.

The protein resides in the cell inner membrane. It catalyses the reaction 2 Na(+)(in) + 3 H(+)(out) = 2 Na(+)(out) + 3 H(+)(in). Its function is as follows. Na(+)/H(+) antiporter that extrudes sodium in exchange for external protons. This chain is Na(+)/H(+) antiporter NhaB, found in Shewanella sp. (strain W3-18-1).